The sequence spans 882 residues: MRALLAQNRLVTLCGTGGVGKTRLAIQIASASELRDGLCFVDLAPITESGIVAATAARAVGLPDQPGRSTMDSLRRFIGNRRMLMVLDNCEHLLDACAALVVELLGACPELTILATSREPIGMAGEITWRVPSMSITDEAVELFADRASRVQPGFTIANHNAAAVGEICRRLDGIPLAIEFAAARVRSMSPLEIADGLDDCFRLLAGGVRGAVQRQQTLRASIDWSHALLTETEQILFRRLAPFVGGFDLAAVRAVAAGSDLDPFSVLDQLTLLVDKSLVVADDCQGRTRYRLLETVRRYALEKLGDSGEADVHARHRDYYTALAASLNTPADNDHQRLVARAETEIDNLRAAFAWSRENGHITEALQLASSLQPIWFGRAHLREGLSWFNSILEDQRFHRLAVSTAVRARALADKAMLSTWLATSPVGATDIIAPAQQALAMAREVGDPAALVRALTACGCSSGYNAEAAAPYFAEATDLARAIDDKWTLCQILYWRGVGTCISGDPNALRAAAEECRDLADTIGDRFVSRHCSLWLSLAQMWAGNLTEALELSREITAEAEASNDVPTKVLGLYTQAQVLAYCGASAAHAIAGACIAAATELGGVYQGIGYAAMTYAALAAGDVTAALEASDAARPILRAQPDQVTMHQVLMAQLALAGGDAIAARQFANDAVDATNGWHRMVALTIRARVATARGEPELARDDAHAALACGAELHIYQGMPDAMELLAGLAGEVGSHSEGVRLLGAAAALRQQTRQVRFKIWDAGYQASVTALREAMGDEDFDRAWAEGAALSTDEAIAYAQRGRGERKRPARGWGSLTPTERDVVRLVSEGLSNKDIAKRLFVSPRTVQTHLTHVYAKLGLPSRVQLVDEAARRGSPS.

The HTH luxR-type domain occupies 814–879 (PARGWGSLTP…QLVDEAARRG (66 aa)). Residues 838–857 (NKDIAKRLFVSPRTVQTHLT) constitute a DNA-binding region (H-T-H motif).

The protein is Putative HTH-type transcriptional regulator Rv0890c of Mycobacterium tuberculosis (strain ATCC 25618 / H37Rv).